The primary structure comprises 213 residues: MDARILQDNDDTSLPVNQASVTRIHKKPGKAEAEAAVRTLLLWAGEDPDREGLLETPKRVAKAYQELFGGYSESPEEVLGTTFEEVAGYDDMVLVKDISFFSHCEHHMVPIIGKAHVAYLPEGRVVGLSKIARVVDIFARRLQTQESITAQIADSIQRILKPRGVAVMIEAEHMCMAMRSIRKQGSSTITTTFTGDFKEKADQQVRFMTLIRT.

Residues Cys-104, His-107, and Cys-175 each coordinate Zn(2+).

This sequence belongs to the GTP cyclohydrolase I family. In terms of assembly, toroid-shaped homodecamer, composed of two pentamers of five dimers.

The catalysed reaction is GTP + H2O = 7,8-dihydroneopterin 3'-triphosphate + formate + H(+). It participates in cofactor biosynthesis; 7,8-dihydroneopterin triphosphate biosynthesis; 7,8-dihydroneopterin triphosphate from GTP: step 1/1. The chain is GTP cyclohydrolase 1 from Brucella abortus (strain 2308).